The following is a 23-amino-acid chain: U22-ctenitoxin-Co1a (23 aa).

Expressed by the venom gland.

The protein localises to the secreted. This chain is U22-ctenitoxin-Co1a, found in Ctenus ornatus (Brazilian spider).